We begin with the raw amino-acid sequence, 176 residues long: RNA pyrophosphohydrolase (176 aa).

Residues glycine 6 to lysine 149 form the Nudix hydrolase domain. A Nudix box motif is present at residues glycine 38 to glycine 59.

It belongs to the Nudix hydrolase family. RppH subfamily. A divalent metal cation serves as cofactor.

Functionally, accelerates the degradation of transcripts by removing pyrophosphate from the 5'-end of triphosphorylated RNA, leading to a more labile monophosphorylated state that can stimulate subsequent ribonuclease cleavage. The chain is RNA pyrophosphohydrolase from Shigella boydii serotype 4 (strain Sb227).